Reading from the N-terminus, the 109-residue chain is UPF0122 protein CLL_A1244 (109 aa).

This sequence belongs to the UPF0122 family.

In terms of biological role, might take part in the signal recognition particle (SRP) pathway. This is inferred from the conservation of its genetic proximity to ftsY/ffh. May be a regulatory protein. The polypeptide is UPF0122 protein CLL_A1244 (Clostridium botulinum (strain Eklund 17B / Type B)).